The following is a 168-amino-acid chain: Cytochrome c oxidase subunit 2 (168 aa).

Topologically, residues 1 to 3 are cytoplasmic; it reads MVD. A helical membrane pass occupies residues 4 to 38; that stretch reads EHKAHKAILAYEKGWLAFSLAMLFVFIALIAYTLA. The Periplasmic segment spans residues 39-168; that stretch reads THTAGVIPAG…NMFGTIVVKE (130 aa). Cu cation is bound by residues H114, C149, C153, and H157.

This sequence belongs to the cytochrome c oxidase subunit 2 family.

It localises to the cell membrane. The enzyme catalyses 4 Fe(II)-[cytochrome c] + O2 + 8 H(+)(in) = 4 Fe(III)-[cytochrome c] + 2 H2O + 4 H(+)(out). In terms of biological role, subunits I and II form the functional core of the enzyme complex. Electrons originating in cytochrome c are transferred via heme a and Cu(A) to the binuclear center formed by heme a3 and Cu(B). The sequence is that of Cytochrome c oxidase subunit 2 (cbaB) from Thermus thermophilus (strain ATCC 27634 / DSM 579 / HB8).